A 459-amino-acid chain; its full sequence is tRNA modification GTPase MnmE (459 aa).

3 residues coordinate (6S)-5-formyl-5,6,7,8-tetrahydrofolate: arginine 23, glutamate 86, and arginine 125. A TrmE-type G domain is found at 221–380; it reads GIDAVIIGKP…LENAITELFV (160 aa). Asparagine 231 lines the K(+) pocket. GTP-binding positions include 231–236, 250–256, and 275–278; these read NVGKSS, TDIPGTT, and DTAG. Position 235 (serine 235) interacts with Mg(2+). Residues threonine 250, isoleucine 252, and threonine 255 each contribute to the K(+) site. Threonine 256 provides a ligand contact to Mg(2+). Position 459 (lysine 459) interacts with (6S)-5-formyl-5,6,7,8-tetrahydrofolate.

The protein belongs to the TRAFAC class TrmE-Era-EngA-EngB-Septin-like GTPase superfamily. TrmE GTPase family. As to quaternary structure, homodimer. Heterotetramer of two MnmE and two MnmG subunits. It depends on K(+) as a cofactor.

The protein localises to the cytoplasm. Functionally, exhibits a very high intrinsic GTPase hydrolysis rate. Involved in the addition of a carboxymethylaminomethyl (cmnm) group at the wobble position (U34) of certain tRNAs, forming tRNA-cmnm(5)s(2)U34. This chain is tRNA modification GTPase MnmE, found in Acetivibrio thermocellus (strain ATCC 27405 / DSM 1237 / JCM 9322 / NBRC 103400 / NCIMB 10682 / NRRL B-4536 / VPI 7372) (Clostridium thermocellum).